Here is a 688-residue protein sequence, read N- to C-terminus: Glycine--tRNA ligase beta subunit (688 aa).

The protein belongs to the class-II aminoacyl-tRNA synthetase family. As to quaternary structure, tetramer of two alpha and two beta subunits.

It is found in the cytoplasm. The catalysed reaction is tRNA(Gly) + glycine + ATP = glycyl-tRNA(Gly) + AMP + diphosphate. This chain is Glycine--tRNA ligase beta subunit, found in Listeria monocytogenes serovar 1/2a (strain ATCC BAA-679 / EGD-e).